The chain runs to 152 residues: Large-conductance mechanosensitive channel (152 aa).

The next 2 helical transmembrane spans lie at 14–34 and 81–101; these read VIDL…VTSL and GLFL…FIAI.

Belongs to the MscL family. In terms of assembly, homopentamer.

The protein resides in the cell membrane. Functionally, channel that opens in response to stretch forces in the membrane lipid bilayer. May participate in the regulation of osmotic pressure changes within the cell. The chain is Large-conductance mechanosensitive channel from Clostridium perfringens (strain 13 / Type A).